We begin with the raw amino-acid sequence, 300 residues long: 11-beta-hydroxysteroid dehydrogenase 1 (300 aa).

Over 1–7 (MAFLKKY) the chain is Cytoplasmic. Residues 8–24 (LLTILMVFLAYYYYSAN) traverse the membrane as a helical; Signal-anchor for type II membrane protein segment. At 25–300 (EKFRPEMLQG…SNEKLYGRWA (276 aa)) the chain is on the lumenal side. Residues 41 to 67 (GASKGIGREIAYHLAKMGAHVVVTARS), 92 to 93 (SM), and 119 to 123 (NHVLY) each bind NADP(+). Residue serine 170 coordinates substrate. The Proton acceptor role is filled by tyrosine 183. 183 to 187 (YSASK) lines the NADP(+) pocket. An N-linked (GlcNAc...) asparagine glycan is attached at asparagine 207. 218-222 (IDTET) is an NADP(+) binding site.

Belongs to the short-chain dehydrogenases/reductases (SDR) family. In terms of assembly, homodimer. Widely expressed in all peripheral tissues, with highest expression in liver, followed by kidney and lung, and very low expression in heart, lung, spleen, stomach, small intestine, colon, skin, skeletal muscle, and ovary.

It localises to the endoplasmic reticulum membrane. It carries out the reaction an 11beta-hydroxysteroid + NADP(+) = an 11-oxosteroid + NADPH + H(+). It catalyses the reaction cortisone + NADPH + H(+) = cortisol + NADP(+). The catalysed reaction is corticosterone + NADP(+) = 11-dehydrocorticosterone + NADPH + H(+). The enzyme catalyses a 7beta-hydroxysteroid + NADP(+) = a 7-oxosteroid + NADPH + H(+). It carries out the reaction 7-oxocholesterol + NADPH + H(+) = 7beta-hydroxycholesterol + NADP(+). It catalyses the reaction chenodeoxycholate + NADP(+) = 7-oxolithocholate + NADPH + H(+). The catalysed reaction is 7-oxolithocholate + NADPH + H(+) = ursodeoxycholate + NADP(+). The enzyme catalyses glycochenodeoxycholate + NADP(+) = 7-oxoglycolithocholate + NADPH + H(+). It carries out the reaction taurochenodeoxycholate + NADP(+) = 7-oxotaurolithocholate + NADPH + H(+). It catalyses the reaction tauroursodeoxycholate + NADP(+) = 7-oxotaurolithocholate + NADPH + H(+). The catalysed reaction is glycoursodeoxycholate + NADP(+) = 7-oxoglycolithocholate + NADPH + H(+). The enzyme catalyses 7-oxopregnenolone + NADPH + H(+) = 7beta-hydroxypregnenolone + NADP(+). It carries out the reaction 3beta,7alpha-dihydroxyandrost-5-en-17-one + NADP(+) = 3beta-hydroxy-5-androstene-7,17-dione + NADPH + H(+). It catalyses the reaction 3beta-hydroxy-5-androstene-7,17-dione + NADPH + H(+) = 3beta,7beta-dihydroxyandrost-5-en-17-one + NADP(+). The catalysed reaction is 3beta-hydroxy-5alpha-androstane-7,17-dione + NADPH + H(+) = 3beta,7beta-dihydroxy-5alpha-androstan-17-one + NADP(+). Controls the reversible conversion of biologically active glucocorticoids such as cortisone to cortisol, and 11-dehydrocorticosterone to corticosterone in the presence of NADP(H). Participates in the corticosteroid receptor-mediated anti-inflammatory response, as well as metabolic and homeostatic processes. Bidirectional in vitro, predominantly functions as a reductase in vivo, thereby increasing the concentration of active glucocorticoids. It has broad substrate specificity, besides glucocorticoids, it accepts other steroid and sterol substrates. Interconverts 7-oxo- and 7-hydroxy-neurosteroids such as 7-oxopregnenolone and 7beta-hydroxypregnenolone, 7-oxodehydroepiandrosterone (3beta-hydroxy-5-androstene-7,17-dione) and 7beta-hydroxydehydroepiandrosterone (3beta,7beta-dihydroxyandrost-5-en-17-one), among others. Catalyzes the stereo-specific conversion of the major dietary oxysterol, 7-ketocholesterol (7-oxocholesterol), into the more polar 7-beta-hydroxycholesterol metabolite. 7-oxocholesterol is one of the most important oxysterols, it participates in several events such as induction of apoptosis, accumulation in atherosclerotic lesions, lipid peroxidation, and induction of foam cell formation. Mediates the 7-oxo reduction of 7-oxolithocholate mainly to chenodeoxycholate, and to a lesser extent to ursodeoxycholate, both in its free form and when conjugated to glycine or taurine, providing a link between glucocorticoid activation and bile acid metabolism. Catalyzes the synthesis of 7-beta-25-dihydroxycholesterol from 7-oxo-25-hydroxycholesterol in vitro, which acts as a ligand for the G-protein-coupled receptor (GPCR) Epstein-Barr virus-induced gene 2 (EBI2) and may thereby regulate immune cell migration. This chain is 11-beta-hydroxysteroid dehydrogenase 1 (HSD11B1), found in Cavia porcellus (Guinea pig).